A 267-amino-acid chain; its full sequence is 4-hydroxy-tetrahydrodipicolinate reductase (267 aa).

Residues 9–14 (GAGGRM) and Asp-35 contribute to the NAD(+) site. Arg-36 contributes to the NADP(+) binding site. NAD(+)-binding positions include 99–101 (GTT) and 123–126 (AANY). His-156 functions as the Proton donor/acceptor in the catalytic mechanism. His-157 is a (S)-2,3,4,5-tetrahydrodipicolinate binding site. The Proton donor role is filled by Lys-160. Position 166–167 (166–167 (GT)) interacts with (S)-2,3,4,5-tetrahydrodipicolinate.

It belongs to the DapB family.

The protein resides in the cytoplasm. It carries out the reaction (S)-2,3,4,5-tetrahydrodipicolinate + NAD(+) + H2O = (2S,4S)-4-hydroxy-2,3,4,5-tetrahydrodipicolinate + NADH + H(+). It catalyses the reaction (S)-2,3,4,5-tetrahydrodipicolinate + NADP(+) + H2O = (2S,4S)-4-hydroxy-2,3,4,5-tetrahydrodipicolinate + NADPH + H(+). Its pathway is amino-acid biosynthesis; L-lysine biosynthesis via DAP pathway; (S)-tetrahydrodipicolinate from L-aspartate: step 4/4. Its function is as follows. Catalyzes the conversion of 4-hydroxy-tetrahydrodipicolinate (HTPA) to tetrahydrodipicolinate. The chain is 4-hydroxy-tetrahydrodipicolinate reductase from Halorhodospira halophila (strain DSM 244 / SL1) (Ectothiorhodospira halophila (strain DSM 244 / SL1)).